The chain runs to 419 residues: Synaptic vesicle membrane protein VAT-1 homolog-like (419 aa).

Residues 1-25 (MAKEGVEKAEETEQMIEKEAGKEPA) show a composition bias toward basic and acidic residues. 2 disordered regions span residues 1-36 (MAKEGVEKAEETEQMIEKEAGKEPAEGGGGDGSHRL) and 384-419 (PTPLMANDSTETSEAGEEEEDHEGDSENKERMPFIQ). S392 is modified (phosphoserine). Phosphothreonine occurs at positions 393 and 395. S396 is subject to Phosphoserine. Residues 397–407 (EAGEEEEDHEG) show a composition bias toward acidic residues. Over residues 408 to 419 (DSENKERMPFIQ) the composition is skewed to basic and acidic residues.

This sequence belongs to the zinc-containing alcohol dehydrogenase family. Quinone oxidoreductase subfamily. As to expression, detected in skin fibroblasts.

The protein is Synaptic vesicle membrane protein VAT-1 homolog-like (VAT1L) of Homo sapiens (Human).